We begin with the raw amino-acid sequence, 467 residues long: Ribulose bisphosphate carboxylase large chain (467 aa).

Positions 1–2 are excised as a propeptide; the sequence is MS. Pro3 bears the N-acetylproline mark. At Lys14 the chain carries N6,N6,N6-trimethyllysine. The substrate site is built by Asn123 and Thr173. The active-site Proton acceptor is the Lys175. Lys177 provides a ligand contact to substrate. Mg(2+) is bound by residues Lys201, Asp203, and Glu204. An N6-carboxylysine modification is found at Lys201. The active-site Proton acceptor is His294. Substrate is bound by residues Arg295, His327, and Ser379.

This sequence belongs to the RuBisCO large chain family. Type I subfamily. As to quaternary structure, heterohexadecamer of 8 large chains and 8 small chains; disulfide-linked. The disulfide link is formed within the large subunit homodimers. The cofactor is Mg(2+). The disulfide bond which can form in the large chain dimeric partners within the hexadecamer appears to be associated with oxidative stress and protein turnover.

It is found in the plastid. Its subcellular location is the chloroplast. It catalyses the reaction 2 (2R)-3-phosphoglycerate + 2 H(+) = D-ribulose 1,5-bisphosphate + CO2 + H2O. The catalysed reaction is D-ribulose 1,5-bisphosphate + O2 = 2-phosphoglycolate + (2R)-3-phosphoglycerate + 2 H(+). Functionally, ruBisCO catalyzes two reactions: the carboxylation of D-ribulose 1,5-bisphosphate, the primary event in carbon dioxide fixation, as well as the oxidative fragmentation of the pentose substrate in the photorespiration process. Both reactions occur simultaneously and in competition at the same active site. The polypeptide is Ribulose bisphosphate carboxylase large chain (Calamus usitatus (Palm tree)).